The sequence spans 1028 residues: Contactin-3 (1028 aa).

An N-terminal signal peptide occupies residues 1–19 (MMLSWKQLILLSFIGCLAG). Ig-like C2-type domains lie at 32–117 (PSNS…AKLQ), 122–209 (ENFK…RVLG), 227–313 (PKIE…GRLT), 318–402 (PYWL…AELK), 408–497 (PDFS…LVVT), and 499–593 (PTRI…AELI). Disulfide bonds link C50-C100, C144-C196, C249-C297, C339-C386, and C431-C479. N-linked (GlcNAc...) asparagine glycans are attached at residues N65 and N193. N-linked (GlcNAc...) asparagine glycans are attached at residues N377, N468, and N489. A disulfide bond links C521 and C577. 4 consecutive Fibronectin type-III domains span residues 600–698 (PPEN…TEEA), 703–800 (APSE…SAEE), 805–901 (APSH…TKKT), and 902–998 (PPSQ…TSMD). The segment at 684–714 (GEPSLPSEKVRTEEAAPEIAPSEVSGGGGSR) is disordered. N-linked (GlcNAc...) asparagine glycosylation is found at N765, N860, N895, N913, N931, and N956. S1002 carries GPI-anchor amidated serine lipidation. A propeptide spans 1003-1028 (TSAISNIHPLSGYMSVLLFFIVNALW) (removed in mature form).

This sequence belongs to the immunoglobulin superfamily. Contactin family. As to quaternary structure, interacts with PTPRG. As to expression, specifically expressed in brain. Ectopically expressed in tumors expressing endogenous intracisternal A-type particles (IAPs).

It is found in the cell membrane. Functionally, contactins mediate cell surface interactions during nervous system development. Has some neurite outgrowth-promoting activity. The polypeptide is Contactin-3 (Cntn3) (Mus musculus (Mouse)).